Here is a 434-residue protein sequence, read N- to C-terminus: Serine hydroxymethyltransferase (434 aa).

(6S)-5,6,7,8-tetrahydrofolate is bound by residues L128 and 132–134 (GHL). K237 is subject to N6-(pyridoxal phosphate)lysine.

Belongs to the SHMT family. In terms of assembly, homodimer. Requires pyridoxal 5'-phosphate as cofactor.

It is found in the cytoplasm. The enzyme catalyses (6R)-5,10-methylene-5,6,7,8-tetrahydrofolate + glycine + H2O = (6S)-5,6,7,8-tetrahydrofolate + L-serine. Its pathway is one-carbon metabolism; tetrahydrofolate interconversion. It participates in amino-acid biosynthesis; glycine biosynthesis; glycine from L-serine: step 1/1. In terms of biological role, catalyzes the reversible interconversion of serine and glycine with tetrahydrofolate (THF) serving as the one-carbon carrier. This reaction serves as the major source of one-carbon groups required for the biosynthesis of purines, thymidylate, methionine, and other important biomolecules. Also exhibits THF-independent aldolase activity toward beta-hydroxyamino acids, producing glycine and aldehydes, via a retro-aldol mechanism. This Corynebacterium glutamicum (strain R) protein is Serine hydroxymethyltransferase.